Reading from the N-terminus, the 71-residue chain is Cell division protein FtsB (71 aa).

Topologically, residues 1 to 3 are cytoplasmic; sequence MKI. The helical transmembrane segment at 4–21 threads the bilayer; sequence LKIFLLSLLFWLQYSLWF. The Extracellular portion of the chain corresponds to 22–71; it reads GKNGVLDFIKIYRRVTIEKKNNEYLDMRNNQIILEIENFNNHINKDKKKT.

The protein belongs to the FtsB family.

It localises to the cell membrane. Essential cell division protein. May link together the upstream cell division proteins, which are predominantly cytoplasmic, with the downstream cell division proteins, which are predominantly extracellular. The chain is Cell division protein FtsB from Buchnera aphidicola subsp. Acyrthosiphon pisum (strain APS) (Acyrthosiphon pisum symbiotic bacterium).